The primary structure comprises 906 residues: Eukaryotic translation initiation factor 3 subunit C (906 aa).

The disordered stretch occupies residues Met1–Ala22. Over residues Ser11–Val20 the composition is skewed to acidic residues. 4 positions are modified to phosphoserine: Ser34, Ser165, Ser176, and Ser185. The tract at residues Arg158–Glu283 is disordered. Over residues Asp162–Asp186 the composition is skewed to acidic residues. The segment covering Glu195 to Ala209 has biased composition (low complexity). Over residues Ala211–Asn237 the composition is skewed to acidic residues. The segment covering Met242–Ile270 has biased composition (basic and acidic residues). The 177-residue stretch at Phe641 to Pro817 folds into the PCI domain. 2 disordered regions span residues Gly853–Gly873 and Gln887–Glu906. Residues Gln894–Glu906 are compositionally biased toward low complexity.

Belongs to the eIF-3 subunit C family. Component of the eukaryotic translation initiation factor 3 (eIF-3) complex. The eIF-3 complex interacts with pix.

Its subcellular location is the cytoplasm. Functionally, component of the eukaryotic translation initiation factor 3 (eIF-3) complex, which is involved in protein synthesis of a specialized repertoire of mRNAs and, together with other initiation factors, stimulates binding of mRNA and methionyl-tRNAi to the 40S ribosome. The eIF-3 complex specifically targets and initiates translation of a subset of mRNAs involved in cell proliferation. The chain is Eukaryotic translation initiation factor 3 subunit C from Drosophila ananassae (Fruit fly).